A 387-amino-acid polypeptide reads, in one-letter code: Protein RecA (387 aa).

80-87 (GPESSGKT) lines the ATP pocket. The segment at 348 to 387 (LDDSEVAETEEETTASKTKAKAKKEEKXVETEEIELELQD) is disordered. 2 stretches are compositionally biased toward acidic residues: residues 349–360 (DDSEVAETEEET) and 378–387 (TEEIELELQD).

The protein belongs to the RecA family.

Its subcellular location is the cytoplasm. Functionally, can catalyze the hydrolysis of ATP in the presence of single-stranded DNA, the ATP-dependent uptake of single-stranded DNA by duplex DNA, and the ATP-dependent hybridization of homologous single-stranded DNAs. It interacts with LexA causing its activation and leading to its autocatalytic cleavage. This Lactococcus lactis subsp. cremoris (Streptococcus cremoris) protein is Protein RecA.